The following is a 260-amino-acid chain: Small ribosomal subunit protein uS2 (260 aa).

This sequence belongs to the universal ribosomal protein uS2 family.

This Roseobacter denitrificans (strain ATCC 33942 / OCh 114) (Erythrobacter sp. (strain OCh 114)) protein is Small ribosomal subunit protein uS2.